The following is a 176-amino-acid chain: ATP-dependent protease subunit HslV (176 aa).

Residue Thr-2 is part of the active site. Residues Gly-157, Cys-160, and Thr-163 each contribute to the Na(+) site.

This sequence belongs to the peptidase T1B family. HslV subfamily. A double ring-shaped homohexamer of HslV is capped on each side by a ring-shaped HslU homohexamer. The assembly of the HslU/HslV complex is dependent on binding of ATP.

It localises to the cytoplasm. It carries out the reaction ATP-dependent cleavage of peptide bonds with broad specificity.. Allosterically activated by HslU binding. Protease subunit of a proteasome-like degradation complex believed to be a general protein degrading machinery. The chain is ATP-dependent protease subunit HslV from Pectobacterium atrosepticum (strain SCRI 1043 / ATCC BAA-672) (Erwinia carotovora subsp. atroseptica).